Reading from the N-terminus, the 120-residue chain is Ribosome-binding factor A (120 aa).

The protein belongs to the RbfA family. In terms of assembly, monomer. Binds 30S ribosomal subunits, but not 50S ribosomal subunits or 70S ribosomes.

The protein localises to the cytoplasm. Functionally, one of several proteins that assist in the late maturation steps of the functional core of the 30S ribosomal subunit. Associates with free 30S ribosomal subunits (but not with 30S subunits that are part of 70S ribosomes or polysomes). Required for efficient processing of 16S rRNA. May interact with the 5'-terminal helix region of 16S rRNA. This is Ribosome-binding factor A from Lactobacillus delbrueckii subsp. bulgaricus (strain ATCC 11842 / DSM 20081 / BCRC 10696 / JCM 1002 / NBRC 13953 / NCIMB 11778 / NCTC 12712 / WDCM 00102 / Lb 14).